Reading from the N-terminus, the 301-residue chain is Rhodopsin (301 aa).

Topologically, residues 1–18 (LHMIHLHWYQYPPMNPMM) are extracellular. A helical transmembrane segment spans residues 19–43 (YPLLLIFMLFTGILCLAGNFVTIWV). Over 44 to 55 (FMNTKSLRTPAN) the chain is Cytoplasmic. The helical transmembrane segment at 56–78 (LLVVNLAMSDFLMMFTMFPPMMV) threads the bilayer. Residues 79 to 92 (TCYYHTWTLGPTFC) lie on the Extracellular side of the membrane. C92 and C169 are disulfide-bonded. A helical membrane pass occupies residues 93–115 (QVYAFLGNLCGCASIWTMVFITF). Positions 116-118 (DRY) match the 'Ionic lock' involved in activated form stabilization motif. Residues 116-134 (DRYNVIVKGVAGEPLSNKK) lie on the Cytoplasmic side of the membrane. The helical transmembrane segment at 135–155 (AAMWILSVWVLSTAWCMAPFF) threads the bilayer. Over 156–182 (GWNSYVPEGNLTGCGTDYLSEDILSRS) the chain is Extracellular. N165 is a glycosylation site (N-linked (GlcNAc...) asparagine). A helical membrane pass occupies residues 183 to 204 (YLYIYSTWVYFLPLTITIYCYV). The Cytoplasmic portion of the chain corresponds to 205–245 (FIIKAVAAHEKGMRDQAKKMGIKSLRNEEAQKTSAECRLAK). Residues 246–267 (IAMTTVALWFIAWTPYLLINWV) form a helical membrane-spanning segment. At 268–278 (GMFARSYLSPV) the chain is on the extracellular side. The helical transmembrane segment at 279-300 (YTIWGYVFAKANAVYNPIVYAI) threads the bilayer. K288 bears the N6-(retinylidene)lysine mark.

The protein belongs to the G-protein coupled receptor 1 family. Opsin subfamily. In terms of assembly, homodimer. Interacts with GNAQ. In terms of processing, contains one covalently linked retinal chromophore.

The protein resides in the cell projection. It localises to the rhabdomere membrane. In terms of biological role, photoreceptor required for image-forming vision at low light intensity. Can use both retinal and 3-dehydroretinal as visual pigment. Light-induced isomerization of 11-cis to all-trans retinal triggers a conformational change that activates signaling via G-proteins. Signaling via GNAQ probably mediates the activation of phospholipase C. The sequence is that of Rhodopsin (RHO) from Faxonius virilis (Virile crayfish).